The following is a 149-amino-acid chain: Calmodulin (149 aa).

Position 2 is an N-acetylalanine (Ala2). EF-hand domains lie at Glu8–Asn43, Pro44–Asp79, Asp81–Lys116, and Leu117–Lys149. Residues Asp21, Asp23, Asp25, Cys27, Glu32, Asp57, Asp59, Asn61, Thr63, Glu68, Asp94, Asp96, Asn98, and Glu105 each coordinate Ca(2+). Position 116 is an N6,N6,N6-trimethyllysine (Lys116). 5 residues coordinate Ca(2+): Asp130, Asp132, Asp134, Gln136, and Glu141.

This sequence belongs to the calmodulin family.

Functionally, calmodulin mediates the control of a large number of enzymes, ion channels and other proteins by Ca(2+). Among the enzymes to be stimulated by the calmodulin-Ca(2+) complex are a number of protein kinases and phosphatases. This is Calmodulin (CALM1) from Solanum lycopersicum (Tomato).